A 45-amino-acid chain; its full sequence is Photosystem II reaction center protein K (45 aa).

The propeptide occupies 1–8 (MEAALLLA). Residues 24 to 44 (LPIIPVFFLLLAFVWQAAVGF) traverse the membrane as a helical segment.

Belongs to the PsbK family. As to quaternary structure, PSII is composed of 1 copy each of membrane proteins PsbA, PsbB, PsbC, PsbD, PsbE, PsbF, PsbH, PsbI, PsbJ, PsbK, PsbL, PsbM, PsbT, PsbX, PsbY, PsbZ, Psb30/Ycf12, peripheral proteins PsbO, CyanoQ (PsbQ), PsbU, PsbV and a large number of cofactors. It forms dimeric complexes.

The protein localises to the cellular thylakoid membrane. Its function is as follows. One of the components of the core complex of photosystem II (PSII). PSII is a light-driven water:plastoquinone oxidoreductase that uses light energy to abstract electrons from H(2)O, generating O(2) and a proton gradient subsequently used for ATP formation. It consists of a core antenna complex that captures photons, and an electron transfer chain that converts photonic excitation into a charge separation. The polypeptide is Photosystem II reaction center protein K (Nostoc sp. (strain PCC 7120 / SAG 25.82 / UTEX 2576)).